The chain runs to 401 residues: Multidrug resistance protein MdtH (401 aa).

Transmembrane regions (helical) follow at residues 13-33 (YFLL…FPLI), 34-54 (SIRF…ALGL), 99-116 (PWIL…GTLF), 139-159 (LLMM…SWLL), 165-185 (FVCW…AWLL), 214-234 (VLTL…LPIV), 243-263 (AAVK…LYPL), 277-297 (LMAG…ITHL), 299-319 (TLFM…PARE), 340-360 (LGLA…YDTG), and 368-388 (LPWF…YWQF).

It belongs to the major facilitator superfamily. DHA1 family. MdtH (TC 2.A.1.2.21) subfamily.

The protein localises to the cell inner membrane. The polypeptide is Multidrug resistance protein MdtH (Yersinia pseudotuberculosis serotype O:1b (strain IP 31758)).